Reading from the N-terminus, the 111-residue chain is Putative carnobacteriocin-B2 immunity protein (111 aa).

Its function is as follows. Could impart immunity to carnobacteriocin-B2 to naturally sensitive host strains. The polypeptide is Putative carnobacteriocin-B2 immunity protein (Carnobacterium maltaromaticum (Carnobacterium piscicola)).